Reading from the N-terminus, the 332-residue chain is Glycerol-3-phosphate dehydrogenase [NAD(P)+] (332 aa).

NADPH is bound by residues tryptophan 13, lysine 34, and lysine 108. The sn-glycerol 3-phosphate site is built by lysine 108, glycine 136, and serine 138. An NADPH-binding site is contributed by alanine 140. Positions 191, 244, 254, 255, and 256 each coordinate sn-glycerol 3-phosphate. Lysine 191 (proton acceptor) is an active-site residue. Arginine 255 is a binding site for NADPH. NADPH is bound by residues valine 279 and glutamate 281.

It belongs to the NAD-dependent glycerol-3-phosphate dehydrogenase family.

The protein localises to the cytoplasm. The catalysed reaction is sn-glycerol 3-phosphate + NAD(+) = dihydroxyacetone phosphate + NADH + H(+). The enzyme catalyses sn-glycerol 3-phosphate + NADP(+) = dihydroxyacetone phosphate + NADPH + H(+). Its pathway is membrane lipid metabolism; glycerophospholipid metabolism. Functionally, catalyzes the reduction of the glycolytic intermediate dihydroxyacetone phosphate (DHAP) to sn-glycerol 3-phosphate (G3P), the key precursor for phospholipid synthesis. This chain is Glycerol-3-phosphate dehydrogenase [NAD(P)+], found in Francisella tularensis subsp. tularensis (strain FSC 198).